Consider the following 390-residue polypeptide: Odorant receptor 85b (390 aa).

Residues 1–30 (MEKLMKYASFFYTAVGIRPYTNGEESKMNK) lie on the Cytoplasmic side of the membrane. Residues 31 to 51 (LIFHIVFWSNVINLSFVGLFE) form a helical membrane-spanning segment. Residues 52–66 (SIYVYSAFMDNKFLE) are Extracellular-facing. Residues 67–87 (AVTALSYIGFVTVGMSKMFFI) form a helical membrane-spanning segment. The Cytoplasmic segment spans residues 88–126 (RWKKTAITELINELKEIYPNGLIREERYNLPMYLGTCSR). Residues 127-147 (ISLIYSLLYSVLIWTFNLFCV) traverse the membrane as a helical segment. The Extracellular portion of the chain corresponds to 148-200 (MEYWVYDKWLNIRVVGKQLPYLMYIPWKWQDNWSYYPLLFSQNFAGYTSAAGQ). Asn179 carries N-linked (GlcNAc...) asparagine glycosylation. The chain crosses the membrane as a helical span at residues 201-221 (ISTDVLLCAVATQLVMHFDFL). The Cytoplasmic portion of the chain corresponds to 222-260 (SNSMERHELSGDWKKDSRFLVDIVRYHERILRLSDAVND). Residues 261–281 (IFGIPLLLNFMVSSFVICFVG) form a helical membrane-spanning segment. Residues 282–291 (FQMTVGVPPD) are Extracellular-facing. The helical transmembrane segment at 292–312 (IVVKLFLFLVSSMSQVYLICH) threads the bilayer. Residues 313 to 360 (YGQLVADASYGFSVATYNQKWYKADVRYKRALVIIIARSQKVTFLKAT) lie on the Cytoplasmic side of the membrane. A helical transmembrane segment spans residues 361 to 381 (IFLDITRSTMTDLLQISYKFF). At 382–390 (ALLRTMYTQ) the chain is on the extracellular side.

Belongs to the insect chemoreceptor superfamily. Heteromeric odorant receptor channel (TC 1.A.69) family. Or49a subfamily. In terms of assembly, interacts with Orco. Complexes exist early in the endomembrane system in olfactory sensory neurons (OSNs), coupling these complexes to the conserved ciliary trafficking pathway. As to expression, expressed in olfactory sensory neurons in the antenna.

The protein localises to the cell membrane. Its function is as follows. Odorant receptor which mediates acceptance or avoidance behavior, depending on its substrates. The odorant receptor repertoire encodes a large collection of odor stimuli that vary widely in identity, intensity, and duration. Forms a complex with Orco to form odorant-sensing units, providing sensitive and prolonged odorant signaling and calcium permeability. Involved in the behavioral responses to 2-heptanone, amyl acetate, and butyl acetate. This chain is Odorant receptor 85b (Or85b), found in Drosophila melanogaster (Fruit fly).